We begin with the raw amino-acid sequence, 169 residues long: Thermonuclease (169 aa).

Positions 1–26 (MKKITTGLIIVVAAIIVLSIQFMTES) are cleaved as a signal peptide. Active-site residues include R65, E73, and R115.

It belongs to the thermonuclease family. The cofactor is Ca(2+).

It localises to the secreted. The enzyme catalyses Endonucleolytic cleavage to nucleoside 3'-phosphates and 3'-phosphooligonucleotide end-products.. Its function is as follows. Enzyme that catalyzes the hydrolysis of both DNA and RNA at the 5'-position of the phosphodiester bond. In Staphylococcus hyicus, this protein is Thermonuclease (nucH).